A 351-amino-acid chain; its full sequence is MNPPKSAPDAQGLSYRDAGVDIDAGDALIDKIKPFAKKTLRDGVLGGIGGFGALFEVPKKYKEPVLVSGTDGVGTKLKLAFHLNKHDTVGQDLVAMSVNDILVQGAEPLFFLDYFACGKLDVDTAATVVKGIAQGCELSGCALIGGETAEMPGMYPDGEYDLAGFAVGAVEKSKIIDGSTIAEGDVVLGLASSGIHSNGFSLVRKIIERANPDLSADFHGRSLADALMAPTRIYVKPLLALMQKLSVKGMAHITGGGLVENIPRVLREGLTAELDQNAWPLPPLFKWLQEHGGVADAEMHRVFNCGIGMAVIVSAADADAAIADLTAAGEQVWKIGTVRATREGEAQTVVV.

The protein belongs to the AIR synthase family.

It localises to the cytoplasm. It carries out the reaction 2-formamido-N(1)-(5-O-phospho-beta-D-ribosyl)acetamidine + ATP = 5-amino-1-(5-phospho-beta-D-ribosyl)imidazole + ADP + phosphate + H(+). Its pathway is purine metabolism; IMP biosynthesis via de novo pathway; 5-amino-1-(5-phospho-D-ribosyl)imidazole from N(2)-formyl-N(1)-(5-phospho-D-ribosyl)glycinamide: step 2/2. The chain is Phosphoribosylformylglycinamidine cyclo-ligase from Burkholderia cenocepacia (strain ATCC BAA-245 / DSM 16553 / LMG 16656 / NCTC 13227 / J2315 / CF5610) (Burkholderia cepacia (strain J2315)).